A 232-amino-acid polypeptide reads, in one-letter code: Flagellar L-ring protein (232 aa).

Residues 1–15 (MKKVLFYVLPFAFFG) form the signal peptide. C16 is lipidated: N-palmitoyl cysteine. C16 carries the S-diacylglycerol cysteine lipid modification.

The protein belongs to the FlgH family. As to quaternary structure, the basal body constitutes a major portion of the flagellar organelle and consists of four rings (L,P,S, and M) mounted on a central rod.

The protein resides in the cell outer membrane. It is found in the bacterial flagellum basal body. Functionally, assembles around the rod to form the L-ring and probably protects the motor/basal body from shearing forces during rotation. The sequence is that of Flagellar L-ring protein from Campylobacter jejuni subsp. jejuni serotype O:6 (strain 81116 / NCTC 11828).